We begin with the raw amino-acid sequence, 935 residues long: Protocadherin gamma-A11 (935 aa).

The first 29 residues, 1-29 (MANRLQRGDRSRLLLLLCIFLGTLRGFRA), serve as a signal peptide directing secretion. 6 Cadherin domains span residues 30 to 134 (RQIR…APSF), 135 to 243 (QEDE…IPMF), 244 to 348 (TQSV…APEI), 349 to 453 (TITS…PPVF), 454 to 563 (PHSS…APEI), and 571 to 677 (DGST…ADLG). Topologically, residues 30–693 (RQIRYSVPEE…NSEASDLSLY (664 aa)) are extracellular. Asn-48 is a glycosylation site (N-linked (GlcNAc...) asparagine). N-linked (GlcNAc...) asparagine glycosylation is found at Asn-255, Asn-266, Asn-420, and Asn-546. The chain crosses the membrane as a helical span at residues 694 to 714 (LVVAVAAVSCIFLVFVIVLLA). Residues 715-935 (LRLWRWHKSR…KKKSGKKEKK (221 aa)) are Cytoplasmic-facing. Disordered regions lie at residues 805–844 (CDPT…WPNN) and 905–935 (ATLT…KEKK). Positions 807 to 844 (PTSNQQAPPNTDWRFSQAQRPGTSGSQNGDDTGTWPNN) are enriched in polar residues. The segment covering 925–935 (NKKKSGKKEKK) has biased composition (basic residues).

The protein localises to the cell membrane. In terms of biological role, potential calcium-dependent cell-adhesion protein. May be involved in the establishment and maintenance of specific neuronal connections in the brain. The chain is Protocadherin gamma-A11 (PCDHGA11) from Pan troglodytes (Chimpanzee).